Consider the following 160-residue polypeptide: Transcriptional repressor NrdR (160 aa).

A zinc finger spans residues 3–34; the sequence is CPFCGNADTQVVDSRVSEEGDTIRRRRRCLSC. An ATP-cone domain is found at 49 to 139; it reads PSVVKRDGSR…VYKSFEDIGE (91 aa).

It belongs to the NrdR family. It depends on Zn(2+) as a cofactor.

In terms of biological role, negatively regulates transcription of bacterial ribonucleotide reductase nrd genes and operons by binding to NrdR-boxes. This chain is Transcriptional repressor NrdR, found in Bordetella bronchiseptica (strain ATCC BAA-588 / NCTC 13252 / RB50) (Alcaligenes bronchisepticus).